Reading from the N-terminus, the 560-residue chain is Alpha-keto-acid decarboxylase (560 aa).

Residue E61 participates in thiamine diphosphate binding. Residues 396–478 form a thiamine pyrophosphate binding region; sequence TSFYGMADHR…VVVNNDGYTV (83 aa). Residues D446, N473, and G475 each coordinate Mg(2+).

Belongs to the TPP enzyme family. A metal cation is required as a cofactor. Thiamine diphosphate serves as cofactor.

Functionally, decarboxylates branched-chain and aromatic alpha-keto acids to aldehydes. The polypeptide is Alpha-keto-acid decarboxylase (kdc) (Mycobacterium bovis (strain ATCC BAA-935 / AF2122/97)).